The following is a 428-amino-acid chain: MCLIDSVHARQILDSRGTPTVEVEVTLEDGSMGRSAVPSGASTGAFEAHELRDQDNNEYLGKGVTRAVRSVNSEIAPVLIGFDAFDQVGLDHRMIELDGTNNKSRLGANAILGVSLASASAAARAADLSLFRYLGGPSSRILPVPMMNIINGGAHADTGVDIQEFMILPVGARSFSESLRWGCEVYHSLKVQLRESGLSSGLGDEGGFAPALRSNRTALDLILSAIEKAGFSPGIDIVLALDIAASEFCKAPGHYRFEGKDITSDELISYYEGLLSSYPLVSIEDPLDQDDWEGYRTLTTHIGDRVQIVGDDLFVTNTSRLSRGIQSGVANSILVKVNQIGTLTETFDAVDMAAKGGYTAVLSHRSGETEDTTIADMAVATNCGQIKTGAPARGERIAKYNQLLRIEEKLGRSARYAGWLSYPRWQGK.

(2R)-2-phosphoglycerate is bound at residue Gln163. Catalysis depends on Glu205, which acts as the Proton donor. The Mg(2+) site is built by Asp242, Glu284, and Asp311. Lys336, Arg365, Ser366, and Lys387 together coordinate (2R)-2-phosphoglycerate. Lys336 (proton acceptor) is an active-site residue.

The protein belongs to the enolase family. The cofactor is Mg(2+).

It localises to the cytoplasm. It is found in the secreted. The protein resides in the cell surface. The enzyme catalyses (2R)-2-phosphoglycerate = phosphoenolpyruvate + H2O. It participates in carbohydrate degradation; glycolysis; pyruvate from D-glyceraldehyde 3-phosphate: step 4/5. Its function is as follows. Catalyzes the reversible conversion of 2-phosphoglycerate (2-PG) into phosphoenolpyruvate (PEP). It is essential for the degradation of carbohydrates via glycolysis. In Tropheryma whipplei (strain TW08/27) (Whipple's bacillus), this protein is Enolase.